Consider the following 435-residue polypeptide: Cytokine-dependent hematopoietic cell linker (435 aa).

Tyr69 and Tyr96 each carry phosphotyrosine; by LYN. Residues 155-303 form a disordered region; the sequence is KINKTPLPPP…PDPTKPDEKD (149 aa). The mediates interaction with PLCG1; essential for BCR signaling; involved in restoration of BCR-induced calcium response and ERK2 and JNK2 activation in BLNK-deficient cells expressing LAT stretch occupies residues 160 to 165; that stretch reads PLPPPR. The segment at 178–182 is mediates interaction with LAT, GRB2, and FGR; involved in translocation to the glycolipid-enriched microdomain and restoration of BCR-induced calcium response in BLNK-deficient DT40 cells expressing LAT; it reads PPAPP. The segment covering 226 to 249 has biased composition (polar residues); sequence PESSCPSSNQNTQKSPPAIASSSY. The segment covering 290-303 has biased composition (basic and acidic residues); that stretch reads NSEKPDPTKPDEKD. The region spanning 309 to 418 is the SH2 domain; sequence WYIGEYSRQA…RKQCYLTQPL (110 aa).

When phosphorylated, interacts with PLCG1, PLCG2, GRB2, VAV and LAT. Associated with a tyrosine-phosphorylated polypeptide (p92) in response to immunoreceptor stimulation. Interacts with LBR and AGO2. Interacts with FGR. Part of a complex consisting of CLNK, SKAP1 and FYB1. Interacts (via SH2 domain) with FYB1; this interaction allows SKAP1 and FYB1 to promote tyrosine phosphorylation of CLNK by LYN. Interacts (via SH2 domain) with MAP4K1. Post-translationally, tyrosine-phosphorylated upon BCR cross-linking. Tyrosine phosphorylation at both Tyr-69 and Tyr-96 are required for BCR-induced calcium response and are essential to restore PLCG2-mediated signaling in BLNK-deficient DT40 cells, but this phosphorylation is dispensable in cells expressing LAT. Interacts with the SH2 domain of PLCG1 via phosphorylated Tyr-96. Tyrosine phosphorylation is increased when complexed with SKAP1 and FYB1. As to expression, expressed in T-cells, mast cells, natural killer and natural killer T cells (at protein level). Expressed in cytokine-stimulated hemopoietic cells.

The protein resides in the cytoplasm. In terms of biological role, an adapter protein which plays a role in the regulation of immunoreceptor signaling, including PLC-gamma-mediated B-cell antigen receptor (BCR) signaling and FC-epsilon R1-mediated mast cell degranulation. Together with FGR, it acts as a negative regulator of natural killer cell-activating receptors and inhibits interferon-gamma production. Acts as a positive regulator of both T-cell receptor and natural killer T (NKT) cell receptor signaling in CD4-positive NKT cells. Together with MAP4K1, it enhances CD3-triggered activation of T-cells and subsequent IL2 production. May be involved in tumor necrosis factor induced cell death by promoting reactive oxidative species generation, and MLKL oligomerization, ultimately leading to necrosis. Involved in phosphorylation of LAT. May be involved in high affinity immunoglobulin epsilon receptor signaling in mast cells. The protein is Cytokine-dependent hematopoietic cell linker (Clnk) of Mus musculus (Mouse).